The primary structure comprises 1358 residues: Indole-3-acetaldehyde oxidase (1358 aa).

Positions 11 to 98 (STVVLAVNGK…RCSVTTSEGI (88 aa)) constitute a 2Fe-2S ferredoxin-type domain. Positions 50, 55, and 58 each coordinate [2Fe-2S] cluster. An FAD-binding PCMH-type domain is found at 241 to 419 (IAASGDGWYH…LSIFIPEWGS (179 aa)). The interval 532–559 (SSAPSNIDTPNGSYTHETGSNVDSPERH) is disordered. The span at 537-554 (NIDTPNGSYTHETGSNVD) shows a compositional bias: polar residues.

It belongs to the xanthine dehydrogenase family. In terms of assembly, aldehyde oxidases (AO) are homodimers and heterodimers of AO subunits. The cofactor is [2Fe-2S] cluster. FAD is required as a cofactor. Requires Mo-molybdopterin as cofactor. Mostly expressed in roots, and, to a lower extent, in mesocotyl, leaves and coleoptile. Accumulates in apical region of maize coleoptiles (at protein level).

It localises to the cytoplasm. The catalysed reaction is indole-3-acetaldehyde + O2 + H2O = (indol-3-yl)acetate + H2O2 + H(+). Its activity is regulated as follows. Inhibited by 2-mercaptoethanol, p-chloromercuribenzoate, and iodoacetate. In higher plants aldehyde oxidases (AO) appear to be homo- and heterodimeric assemblies of AO subunits with probably different physiological functions. Involved in the biosynthesis of auxin from (indol-3-yl)acetaldehyde. Can also use indole-3-aldehyde and benzaldehyde as substrate. This is Indole-3-acetaldehyde oxidase (AO1) from Zea mays (Maize).